We begin with the raw amino-acid sequence, 463 residues long: Fumarate hydratase class II (463 aa).

Substrate is bound by residues 97 to 99 (SGT), 128 to 131 (HPND), 138 to 140 (SSN), and Thr-186. Residue His-187 is the Proton donor/acceptor of the active site. Residue Ser-317 is part of the active site. Substrate contacts are provided by residues Ser-318 and 323-325 (KVN).

Belongs to the class-II fumarase/aspartase family. Fumarase subfamily. Homotetramer.

The protein localises to the cytoplasm. The enzyme catalyses (S)-malate = fumarate + H2O. The protein operates within carbohydrate metabolism; tricarboxylic acid cycle; (S)-malate from fumarate: step 1/1. Involved in the TCA cycle. Catalyzes the stereospecific interconversion of fumarate to L-malate. The chain is Fumarate hydratase class II from Helicobacter pylori (strain ATCC 700392 / 26695) (Campylobacter pylori).